We begin with the raw amino-acid sequence, 57 residues long: Temporin-ALk (57 aa).

An N-terminal signal peptide occupies residues 1 to 22 (MFTLKKSLLLLFFLGTINLSLC). Positions 23 to 46 (EQERNAEEERRDDLGERQAEVEKR) are excised as a propeptide. A Serine amide modification is found at S56.

Belongs to the frog skin active peptide (FSAP) family. Temporin subfamily. As to expression, expressed by the skin glands.

The protein localises to the secreted. In terms of biological role, antimicrobial peptide with weak activity against Gram-positive and Gram-negative bacteria and against fungi. Has been tested against S.aureus (MIC=15.0 ug/mL), B.pumilus (no activity detected), B.cereus (no activity detected), E.coli (MIC=30.0 ug/mL), B.dysenteriae (MIC=60.0 ug/mL), A.cacoaceticus (MIC=75.0 ug/mL), P.aeruginosa (MIC=25.0 ug/mL) and C.albicans (MIC=15.0 ug/mL). Also shows a weak hemolytic activity. This is Temporin-ALk from Amolops loloensis (Lolokou Sucker Frog).